A 465-amino-acid polypeptide reads, in one-letter code: tRNA modification GTPase MnmE (465 aa).

3 residues coordinate (6S)-5-formyl-5,6,7,8-tetrahydrofolate: Arg-23, Glu-81, and Lys-120. One can recognise a TrmE-type G domain in the interval 217–389 (GVHVVLAGRP…LIASLCDKVG (173 aa)). Residue Asn-227 coordinates K(+). GTP contacts are provided by residues 227–232 (NAGKSS), 246–252 (TDVAGTT), and 271–274 (DTAG). Ser-231 contacts Mg(2+). Positions 246, 248, and 251 each coordinate K(+). Thr-252 contacts Mg(2+). Lys-465 lines the (6S)-5-formyl-5,6,7,8-tetrahydrofolate pocket.

It belongs to the TRAFAC class TrmE-Era-EngA-EngB-Septin-like GTPase superfamily. TrmE GTPase family. In terms of assembly, homodimer. Heterotetramer of two MnmE and two MnmG subunits. It depends on K(+) as a cofactor.

Its subcellular location is the cytoplasm. In terms of biological role, exhibits a very high intrinsic GTPase hydrolysis rate. Involved in the addition of a carboxymethylaminomethyl (cmnm) group at the wobble position (U34) of certain tRNAs, forming tRNA-cmnm(5)s(2)U34. The sequence is that of tRNA modification GTPase MnmE from Psychrobacter sp. (strain PRwf-1).